The chain runs to 369 residues: GTPase Obg (369 aa).

The Obg domain occupies 1–159 (MKFIDEAKIE…RELRLELKVL (159 aa)). Residues 128-148 (IHFKSSTNRAPRQKSEGKEGE) are disordered. The OBG-type G domain occupies 160–333 (ADIGLLGMPN…LVTEIYDYIA (174 aa)). GTP-binding positions include 166-173 (GMPNAGKS), 191-195 (FTTLH), 213-216 (DIPG), 283-286 (NKLD), and 314-316 (SAL). Mg(2+) contacts are provided by Ser173 and Thr193.

The protein belongs to the TRAFAC class OBG-HflX-like GTPase superfamily. OBG GTPase family. In terms of assembly, monomer. Requires Mg(2+) as cofactor.

Its subcellular location is the cytoplasm. Functionally, an essential GTPase which binds GTP, GDP and possibly (p)ppGpp with moderate affinity, with high nucleotide exchange rates and a fairly low GTP hydrolysis rate. Plays a role in control of the cell cycle, stress response, ribosome biogenesis and in those bacteria that undergo differentiation, in morphogenesis control. In Herminiimonas arsenicoxydans, this protein is GTPase Obg.